The sequence spans 426 residues: tRNA(Ile)-lysidine synthase (426 aa).

21-26 (SGGLDS) contributes to the ATP binding site.

The protein belongs to the tRNA(Ile)-lysidine synthase family.

The protein resides in the cytoplasm. It carries out the reaction cytidine(34) in tRNA(Ile2) + L-lysine + ATP = lysidine(34) in tRNA(Ile2) + AMP + diphosphate + H(+). In terms of biological role, ligates lysine onto the cytidine present at position 34 of the AUA codon-specific tRNA(Ile) that contains the anticodon CAU, in an ATP-dependent manner. Cytidine is converted to lysidine, thus changing the amino acid specificity of the tRNA from methionine to isoleucine. This chain is tRNA(Ile)-lysidine synthase, found in Enterobacter sp. (strain 638).